Consider the following 169-residue polypeptide: Putative prolyl-tRNA synthetase associated domain-containing protein 1 (169 aa).

This sequence belongs to the PRORSD1 family.

The sequence is that of Putative prolyl-tRNA synthetase associated domain-containing protein 1 (PRORSD1P) from Homo sapiens (Human).